A 328-amino-acid polypeptide reads, in one-letter code: Beta-ketoacyl-[acyl-carrier-protein] synthase III (328 aa).

Residues Cys122 and His255 contribute to the active site. An ACP-binding region spans residues 256–260 (QANIR). The active site involves Asn285.

The protein belongs to the thiolase-like superfamily. FabH family. In terms of assembly, homodimer.

The protein resides in the cytoplasm. It catalyses the reaction malonyl-[ACP] + acetyl-CoA + H(+) = 3-oxobutanoyl-[ACP] + CO2 + CoA. It participates in lipid metabolism; fatty acid biosynthesis. In terms of biological role, catalyzes the condensation reaction of fatty acid synthesis by the addition to an acyl acceptor of two carbons from malonyl-ACP. Catalyzes the first condensation reaction which initiates fatty acid synthesis and may therefore play a role in governing the total rate of fatty acid production. Possesses both acetoacetyl-ACP synthase and acetyl transacylase activities. Its substrate specificity determines the biosynthesis of branched-chain and/or straight-chain of fatty acids. In Janthinobacterium sp. (strain Marseille) (Minibacterium massiliensis), this protein is Beta-ketoacyl-[acyl-carrier-protein] synthase III.